We begin with the raw amino-acid sequence, 190 residues long: Double zinc ribbon protein MJ0416 (190 aa).

The DZANK-type zinc-finger motif lies at 134–183 (CPNCNNYISDSWKYCAHCGAKLKEEEEEVLRCPNCKRPVQPEWIVCPYCG).

The chain is Double zinc ribbon protein MJ0416 from Methanocaldococcus jannaschii (strain ATCC 43067 / DSM 2661 / JAL-1 / JCM 10045 / NBRC 100440) (Methanococcus jannaschii).